Reading from the N-terminus, the 341-residue chain is Phosphoribosylformylglycinamidine cyclo-ligase (341 aa).

It belongs to the AIR synthase family.

The protein resides in the cytoplasm. It catalyses the reaction 2-formamido-N(1)-(5-O-phospho-beta-D-ribosyl)acetamidine + ATP = 5-amino-1-(5-phospho-beta-D-ribosyl)imidazole + ADP + phosphate + H(+). Its pathway is purine metabolism; IMP biosynthesis via de novo pathway; 5-amino-1-(5-phospho-D-ribosyl)imidazole from N(2)-formyl-N(1)-(5-phospho-D-ribosyl)glycinamide: step 2/2. The protein is Phosphoribosylformylglycinamidine cyclo-ligase of Caldicellulosiruptor bescii (strain ATCC BAA-1888 / DSM 6725 / KCTC 15123 / Z-1320) (Anaerocellum thermophilum).